We begin with the raw amino-acid sequence, 176 residues long: NAD(P)H-quinone oxidoreductase subunit 6, chloroplastic (176 aa).

Helical transmembrane passes span 10–30 (FLLV…VLLP), 32–52 (PIFS…LYIL), 61–81 (AQLL…VMFM), 92–112 (LWTV…FSLM), and 152–172 (FFLP…GAIS).

This sequence belongs to the complex I subunit 6 family. NDH is composed of at least 16 different subunits, 5 of which are encoded in the nucleus.

It is found in the plastid. Its subcellular location is the chloroplast thylakoid membrane. The enzyme catalyses a plastoquinone + NADH + (n+1) H(+)(in) = a plastoquinol + NAD(+) + n H(+)(out). The catalysed reaction is a plastoquinone + NADPH + (n+1) H(+)(in) = a plastoquinol + NADP(+) + n H(+)(out). NDH shuttles electrons from NAD(P)H:plastoquinone, via FMN and iron-sulfur (Fe-S) centers, to quinones in the photosynthetic chain and possibly in a chloroplast respiratory chain. The immediate electron acceptor for the enzyme in this species is believed to be plastoquinone. Couples the redox reaction to proton translocation, and thus conserves the redox energy in a proton gradient. This chain is NAD(P)H-quinone oxidoreductase subunit 6, chloroplastic (ndhG), found in Barbarea verna (Land cress).